Consider the following 860-residue polypeptide: Leucine--tRNA ligase (860 aa).

The 'HIGH' region signature appears at 42-52 (PYPSGRLHMGH). Positions 619–623 (KMSKS) match the 'KMSKS' region motif. Residue Lys622 participates in ATP binding.

Belongs to the class-I aminoacyl-tRNA synthetase family.

It is found in the cytoplasm. It carries out the reaction tRNA(Leu) + L-leucine + ATP = L-leucyl-tRNA(Leu) + AMP + diphosphate. This is Leucine--tRNA ligase from Yersinia pseudotuberculosis serotype O:3 (strain YPIII).